A 227-amino-acid polypeptide reads, in one-letter code: Uracil-DNA glycosylase (227 aa).

Residue Asp68 is the Proton acceptor of the active site.

This sequence belongs to the uracil-DNA glycosylase (UDG) superfamily. UNG family.

Its subcellular location is the cytoplasm. It catalyses the reaction Hydrolyzes single-stranded DNA or mismatched double-stranded DNA and polynucleotides, releasing free uracil.. Its function is as follows. Excises uracil residues from the DNA which can arise as a result of misincorporation of dUMP residues by DNA polymerase or due to deamination of cytosine. This is Uracil-DNA glycosylase from Mycobacterium avium (strain 104).